A 145-amino-acid chain; its full sequence is Putative pre-16S rRNA nuclease (145 aa).

The protein belongs to the YqgF nuclease family.

Its subcellular location is the cytoplasm. Could be a nuclease involved in processing of the 5'-end of pre-16S rRNA. The sequence is that of Putative pre-16S rRNA nuclease from Microcystis aeruginosa (strain NIES-843 / IAM M-2473).